We begin with the raw amino-acid sequence, 276 residues long: 3' cyclic ADP-D-ribose synthase HopAM1 (276 aa).

Residues 20–38 (VEASQVKSAGTSSTTNIDS) are compositionally biased toward polar residues. Residues 20–39 (VEASQVKSAGTSSTTNIDSK) are disordered. A TIR domain region spans residues 165–214 (KNGIAHAKKMAFFITPEWLGSDFCKQEFQWLSETKNKDIKSAFVIFKDVD). The active site involves Gln-190.

In terms of assembly, homodimer.

Its subcellular location is the host cytoplasm. The protein localises to the host cytosol. It carries out the reaction NAD(+) = 3'cADPR + nicotinamide + H(+). Functionally, NAD(+) hydrolase (NADase) that cleaves NAD(+) into nicotinamide and 3' cyclic ADP-D-ribose (3'cADPR, v2-cADPR). Upon infiltration of A.thaliana with this bacteria an effector-triggered immunity-like phenotype (ETI-like, cell death with severe chlorosis) is seen, 3'cADPR levels rise while NAD(+) levels remain constant. Plant immune responses are suppressed. Triggers hypersensitive response-like cell death in Nicotiana tabacum cv. Xanthi and N.benthamiana when transiently expressed, depletes NAD(+) in N.benthamiana. Causes cell death upon induction in yeast due to NAD(+) depletion and/or 3'cADPR itself. Transgenic A.thaliana expressing HopAM1 suppresses its plant immune system upon challenge; the plants produce 3'cADPR without significantly depleting NAD(+). This is 3' cyclic ADP-D-ribose synthase HopAM1 from Pseudomonas syringae pv. tomato (strain ATCC BAA-871 / DC3000).